The chain runs to 197 residues: 3-isopropylmalate dehydratase small subunit (197 aa).

It belongs to the LeuD family. LeuD type 1 subfamily. As to quaternary structure, heterodimer of LeuC and LeuD.

The catalysed reaction is (2R,3S)-3-isopropylmalate = (2S)-2-isopropylmalate. It participates in amino-acid biosynthesis; L-leucine biosynthesis; L-leucine from 3-methyl-2-oxobutanoate: step 2/4. Catalyzes the isomerization between 2-isopropylmalate and 3-isopropylmalate, via the formation of 2-isopropylmaleate. This chain is 3-isopropylmalate dehydratase small subunit, found in Streptococcus suis (strain 98HAH33).